We begin with the raw amino-acid sequence, 165 residues long: Pyruvoyl-dependent arginine decarboxylase 1 (165 aa).

A Pyruvic acid (Ser) modification is found at S45.

Belongs to the PdaD family. Requires pyruvate as cofactor.

It catalyses the reaction L-arginine + H(+) = agmatine + CO2. The chain is Pyruvoyl-dependent arginine decarboxylase 1 (pdaD1) from Methanosarcina acetivorans (strain ATCC 35395 / DSM 2834 / JCM 12185 / C2A).